Consider the following 510-residue polypeptide: NAD(P)H-quinone oxidoreductase subunit 2 A, chloroplastic (510 aa).

A run of 13 helical transmembrane segments spans residues 24–44 (LLLF…GLIL), 57–77 (IPWL…ALLF), 99–119 (IFQF…VEYI), 124–144 (MAIT…MFLC), 149–169 (LITI…LSGY), 183–203 (YLLM…WLYG), 227–247 (PGIS…LSPA), 295–315 (WHLL…LIAI), 323–343 (MLAY…IVGD), 354–374 (YMLF…LFGL), 395–415 (ALSL…AGFF), 418–438 (LYLF…IGLL), and 484–504 (MIVC…IIAI).

It belongs to the complex I subunit 2 family. In terms of assembly, NDH is composed of at least 16 different subunits, 5 of which are encoded in the nucleus.

It localises to the plastid. It is found in the chloroplast thylakoid membrane. It catalyses the reaction a plastoquinone + NADH + (n+1) H(+)(in) = a plastoquinol + NAD(+) + n H(+)(out). The catalysed reaction is a plastoquinone + NADPH + (n+1) H(+)(in) = a plastoquinol + NADP(+) + n H(+)(out). In terms of biological role, NDH shuttles electrons from NAD(P)H:plastoquinone, via FMN and iron-sulfur (Fe-S) centers, to quinones in the photosynthetic chain and possibly in a chloroplast respiratory chain. The immediate electron acceptor for the enzyme in this species is believed to be plastoquinone. Couples the redox reaction to proton translocation, and thus conserves the redox energy in a proton gradient. This is NAD(P)H-quinone oxidoreductase subunit 2 A, chloroplastic from Solanum lycopersicum (Tomato).